A 275-amino-acid chain; its full sequence is 3-deoxy-manno-octulosonate cytidylyltransferase (275 aa).

This sequence belongs to the KdsB family.

The protein resides in the cytoplasm. The enzyme catalyses 3-deoxy-alpha-D-manno-oct-2-ulosonate + CTP = CMP-3-deoxy-beta-D-manno-octulosonate + diphosphate. Its pathway is nucleotide-sugar biosynthesis; CMP-3-deoxy-D-manno-octulosonate biosynthesis; CMP-3-deoxy-D-manno-octulosonate from 3-deoxy-D-manno-octulosonate and CTP: step 1/1. It participates in bacterial outer membrane biogenesis; lipopolysaccharide biosynthesis. Functionally, activates KDO (a required 8-carbon sugar) for incorporation into bacterial lipopolysaccharide in Gram-negative bacteria. The chain is 3-deoxy-manno-octulosonate cytidylyltransferase from Psychrobacter sp. (strain PRwf-1).